The following is a 118-amino-acid chain: Large ribosomal subunit protein bL20 (118 aa).

The protein belongs to the bacterial ribosomal protein bL20 family.

Its function is as follows. Binds directly to 23S ribosomal RNA and is necessary for the in vitro assembly process of the 50S ribosomal subunit. It is not involved in the protein synthesizing functions of that subunit. This chain is Large ribosomal subunit protein bL20, found in Psychrobacter arcticus (strain DSM 17307 / VKM B-2377 / 273-4).